The sequence spans 483 residues: Regulatory protein ViaA (483 aa).

This sequence belongs to the ViaA family. Homodimer. Interacts with RavA.

It localises to the cytoplasm. Component of the RavA-ViaA chaperone complex, which may act on the membrane to optimize the function of some of the respiratory chains. ViaA stimulates the ATPase activity of RavA. This is Regulatory protein ViaA from Salmonella choleraesuis (strain SC-B67).